A 373-amino-acid polypeptide reads, in one-letter code: 3 beta-hydroxysteroid dehydrogenase/Delta 5--&gt;4-isomerase type 1 (373 aa).

NADP(+) is bound by residues 10–15, Tyr-155, and Lys-159; that span reads GAGGFV. Catalysis depends on Lys-159, which acts as the Proton donor. Residues 288–308 form a helical membrane-spanning segment; it reads LPLLYWLAFLLETVSFLLRPF.

It belongs to the 3-beta-HSD family. In terms of tissue distribution, adrenal glands, kidney, testes and ovaries.

It is found in the endoplasmic reticulum membrane. Its subcellular location is the mitochondrion membrane. The enzyme catalyses a 3beta-hydroxy-Delta(5)-steroid + NAD(+) = a 3-oxo-Delta(5)-steroid + NADH + H(+). It catalyses the reaction pregnenolone + NAD(+) = pregn-5-ene-3,20-dione + NADH + H(+). The catalysed reaction is 3beta-hydroxyandrost-5-en-17-one + NAD(+) = androst-5-ene-3,17-dione + NADH + H(+). It carries out the reaction androst-5-en-3beta,17beta-diol + NAD(+) = 17beta-hydroxy-androst-5-en-3-one + NADH + H(+). The enzyme catalyses a 3beta-hydroxysteroid + NADP(+) = a 3-oxosteroid + NADPH + H(+). It catalyses the reaction 5alpha-androstane-3beta,17beta-diol + NADP(+) = 17beta-hydroxy-5alpha-androstan-3-one + NADPH + H(+). The catalysed reaction is 3beta-hydroxy-5alpha-androstan-17-one + NADP(+) = 5alpha-androstan-3,17-dione + NADPH + H(+). It carries out the reaction a 3-oxo-Delta(5)-steroid = a 3-oxo-Delta(4)-steroid. The enzyme catalyses pregn-5-ene-3,20-dione = progesterone. It catalyses the reaction androst-5-ene-3,17-dione = androst-4-ene-3,17-dione. The catalysed reaction is 17beta-hydroxy-androst-5-en-3-one = testosterone. It carries out the reaction 5alpha-androstane-3beta,17beta-diol + NAD(+) = 17beta-hydroxy-5alpha-androstan-3-one + NADH + H(+). It participates in steroid hormone biosynthesis. It functions in the pathway steroid metabolism. Functionally, a bifunctional enzyme responsible for the oxidation and isomerization of 3beta-hydroxy-Delta(5)-steroid precursors to 3-oxo-Delta(4)-steroids, an essential step in steroid hormone biosynthesis. Specifically catalyzes the conversion of pregnenolone to progesterone, dehydroepiandrosterone (DHEA) to 4-androstenedione, and androstenediol to testosterone. Additionally, catalyzes the interconversion between 3beta-hydroxy and 3-oxo-5alpha-androstane steroids controlling the bioavalability of the active forms. Specifically converts dihydrotestosterone to its inactive form 5alpha-androstanediol, that does not bind androgen receptor/AR. Also converts androstanedione, a precursor of testosterone and estrone, to epiandrosterone. Expected to use NAD(+) as preferred electron donor for the 3beta-hydroxy-steroid dehydrogenase activity and NADPH for the 3-ketosteroid reductase activity. This Rattus norvegicus (Rat) protein is 3 beta-hydroxysteroid dehydrogenase/Delta 5--&gt;4-isomerase type 1.